Consider the following 289-residue polypeptide: Trimeric intracellular cation channel type B (289 aa).

The Lumenal portion of the chain corresponds to 1-18 (MDVFAFFNLNELAFGLSK). A helical membrane pass occupies residues 19–36 (LPMFPYFDMAHYIISVMS). At 37-49 (LREQPGALCVSQR) the chain is on the cytoplasmic side. Residues 50 to 73 (SPLACWFSSMLYCFGGAVLSALML) traverse the membrane as a helical segment. The Lumenal portion of the chain corresponds to 74–85 (ADAPVAPLSNTT). A helical membrane pass occupies residues 86–103 (NLLLATLMWYLVFYCPLD). Over 104 to 107 (VVYS) the chain is Cytoplasmic. The helical transmembrane segment at 108–125 (LASLLPLRLVLTAMKEVT) threads the bilayer. A 1,2-diacyl-sn-glycero-3-phospho-(1D-myo-inositol-4,5-bisphosphate) contacts are provided by lysine 122 and arginine 126. Over 126–144 (RTWKVLSGVSQAGSKYSDA) the chain is Lumenal. The helical transmembrane segment at 145–162 (LFVMVAVGWAKGAGGGLI) threads the bilayer. The Cytoplasmic segment spans residues 163 to 183 (SNFEQLVRGVWKPETNELLKM). The helical transmembrane segment at 184-201 (SYPTKVTLLGAVVFSLQQ) threads the bilayer. Over 202–210 (CRYLPIQTH) the chain is Lumenal. A helical transmembrane segment spans residues 211–230 (HLTFIYTLFTVTNKTRMMLL). Residues 231-289 (GSSSHPLSSLESFLYKTLFVRPLTDLSAEHTHSKHNGSVPEPTTAQTHTKEAEASKKTN) are Cytoplasmic-facing. Residues 260-289 (HTHSKHNGSVPEPTTAQTHTKEAEASKKTN) are disordered. A compositionally biased stretch (basic and acidic residues) spans 278 to 289 (HTKEAEASKKTN).

Belongs to the TMEM38 family. As to quaternary structure, homotrimer; conformation seems to be controled by binding to diacylglycerol (DAG).

It localises to the endoplasmic reticulum membrane. It catalyses the reaction K(+)(in) = K(+)(out). Channel activity is activated by increased cytosolic Ca(2+) levels and blocked by luminal high Ca(2+) levels. Intracellular monovalent cation channel required for maintenance of rapid intracellular calcium release. Acts as a potassium counter-ion channel that functions in synchronization with calcium release from intracellular stores. Activated by increased cytosolic Ca(2+) levels. In Danio rerio (Zebrafish), this protein is Trimeric intracellular cation channel type B (tmem38b).